A 187-amino-acid polypeptide reads, in one-letter code: Peptidoglycan-recognition protein 2 (187 aa).

Residues 1–19 form the signal peptide; that stretch reads MKAFLVALVVAIELTLVFA. Intrachain disulfides connect Cys-21-Cys-144 and Cys-58-Cys-64. The N-acetylmuramoyl-L-alanine amidase domain occupies 43 to 170; it reads KPLKYVIIHH…RTVRPTDSPG (128 aa).

This sequence belongs to the N-acetylmuramoyl-L-alanine amidase 2 family. In terms of tissue distribution, localizes to plasma (at protein level).

It is found in the secreted. Its function is as follows. Peptidoglycan-recognition protein probably involved in innate immunity by binding to peptidoglycans (PGN) of bacteria and activating the prophenoloxidase (proPO) cascade immune response. Binds to 1,3-beta-D-glucan and PGN. In Holotrichia diomphalia (Korean black chafer), this protein is Peptidoglycan-recognition protein 2 (PGRP-2).